Reading from the N-terminus, the 484-residue chain is Probable glycine dehydrogenase (decarboxylating) subunit 2 (484 aa).

Lys264 bears the N6-(pyridoxal phosphate)lysine mark.

This sequence belongs to the GcvP family. C-terminal subunit subfamily. The glycine cleavage system is composed of four proteins: P, T, L and H. In this organism, the P 'protein' is a heterodimer of two subunits. Pyridoxal 5'-phosphate is required as a cofactor.

It catalyses the reaction N(6)-[(R)-lipoyl]-L-lysyl-[glycine-cleavage complex H protein] + glycine + H(+) = N(6)-[(R)-S(8)-aminomethyldihydrolipoyl]-L-lysyl-[glycine-cleavage complex H protein] + CO2. Functionally, the glycine cleavage system catalyzes the degradation of glycine. The P protein binds the alpha-amino group of glycine through its pyridoxal phosphate cofactor; CO(2) is released and the remaining methylamine moiety is then transferred to the lipoamide cofactor of the H protein. This is Probable glycine dehydrogenase (decarboxylating) subunit 2 from Legionella pneumophila (strain Lens).